The chain runs to 797 residues: Protein tamozhennic (797 aa).

The PUB domain maps to 79–146 (QNAIVAFETI…AAEDTFVLEG (68 aa)). Disordered stretches follow at residues 515 to 570 (AGGI…ISDL) and 638 to 697 (LSIT…SAGV). A compositionally biased stretch (basic and acidic residues) spans 662–679 (EKARTLDKKSGTGRREAK). The segment at 735 to 766 (IVTSPNEWSCSFCTFLNPDTKRICEMCCRSKD) adopts a RanBP2-type zinc-finger fold.

Homomultimer. Binds to dl and msl-1 via their nuclear localization signal (NLS). Also binds to Ran, Ran-like and mbo.

It is found in the cytoplasm. Functionally, has an essential role during oogenesis and embryogenesis, perhaps in modulating the levels of nuclear import of additional proteins. Modulates the nuclear import of dorsal (dl), Dif and male specific lethal 1 (msl-1). Negatively regulates nuclear import of dl and controls the accumulation of dl in the nucleus after immune challenge. The sequence is that of Protein tamozhennic (tamo) from Drosophila melanogaster (Fruit fly).